Reading from the N-terminus, the 725-residue chain is Glyoxysomal fatty acid beta-oxidation multifunctional protein MFP-a (725 aa).

Glutamate 119 serves as the catalytic Nucleophile. The active-site Proton acceptor is the glutamate 139. Positions 723-725 (SRL) match the Microbody targeting signal motif.

This sequence in the N-terminal section; belongs to the enoyl-CoA hydratase/isomerase family. It in the central section; belongs to the 3-hydroxyacyl-CoA dehydrogenase family.

The protein resides in the glyoxysome. The catalysed reaction is a (3S)-3-hydroxyacyl-CoA = a (2E)-enoyl-CoA + H2O. The enzyme catalyses a 4-saturated-(3S)-3-hydroxyacyl-CoA = a (3E)-enoyl-CoA + H2O. It catalyses the reaction a (3Z)-enoyl-CoA = a 4-saturated (2E)-enoyl-CoA. It carries out the reaction a (3E)-enoyl-CoA = a 4-saturated (2E)-enoyl-CoA. The catalysed reaction is (3S)-3-hydroxybutanoyl-CoA = (3R)-3-hydroxybutanoyl-CoA. The enzyme catalyses a (3S)-3-hydroxyacyl-CoA + NAD(+) = a 3-oxoacyl-CoA + NADH + H(+). It functions in the pathway lipid metabolism; fatty acid beta-oxidation. This Brassica napus (Rape) protein is Glyoxysomal fatty acid beta-oxidation multifunctional protein MFP-a.